The following is a 356-amino-acid chain: tRNA-specific 2-thiouridylase MnmA 1 (356 aa).

Residues 8–15 (GMSGGVDS) and M34 each bind ATP. Catalysis depends on C103, which acts as the Nucleophile. C103 and C199 are joined by a disulfide. Residue G127 coordinates ATP. The interaction with tRNA stretch occupies residues 149–151 (KDQ). The active-site Cysteine persulfide intermediate is the C199. Residues 305–306 (RY) are interaction with tRNA.

The protein belongs to the MnmA/TRMU family.

The protein resides in the cytoplasm. The enzyme catalyses S-sulfanyl-L-cysteinyl-[protein] + uridine(34) in tRNA + AH2 + ATP = 2-thiouridine(34) in tRNA + L-cysteinyl-[protein] + A + AMP + diphosphate + H(+). Its function is as follows. Catalyzes the 2-thiolation of uridine at the wobble position (U34) of tRNA, leading to the formation of s(2)U34. The polypeptide is tRNA-specific 2-thiouridylase MnmA 1 (Clostridium botulinum (strain Langeland / NCTC 10281 / Type F)).